A 141-amino-acid chain; its full sequence is Small ribosomal subunit protein uS9c (141 aa).

Belongs to the universal ribosomal protein uS9 family.

Its subcellular location is the plastid. It is found in the chloroplast. The sequence is that of Small ribosomal subunit protein uS9c (rps9) from Tupiella akineta (Green alga).